The chain runs to 156 residues: Small ribosomal subunit protein uS7c (156 aa).

This sequence belongs to the universal ribosomal protein uS7 family. In terms of assembly, part of the 30S ribosomal subunit.

It localises to the plastid. One of the primary rRNA binding proteins, it binds directly to 16S rRNA where it nucleates assembly of the head domain of the 30S subunit. The polypeptide is Small ribosomal subunit protein uS7c (rps7) (Prototheca wickerhamii).